Consider the following 140-residue polypeptide: Large ribosomal subunit protein uL16 (140 aa).

This sequence belongs to the universal ribosomal protein uL16 family. In terms of assembly, part of the 50S ribosomal subunit.

Binds 23S rRNA and is also seen to make contacts with the A and possibly P site tRNAs. This is Large ribosomal subunit protein uL16 from Phytoplasma mali (strain AT).